The primary structure comprises 326 residues: Transformer-2 protein homolog (326 aa).

2 disordered regions span residues M1–V114 and L179–R326. Over residues R38–P55 the composition is skewed to basic and acidic residues. Low complexity predominate over residues P56–P85. Residues R104–N113 show a composition bias toward polar residues. One can recognise an RRM domain in the interval N113–T191. A compositionally biased stretch (gly residues) spans Y220–D239. Residues R240–R326 are compositionally biased toward basic and acidic residues.

The protein belongs to the splicing factor SR family.

Its subcellular location is the nucleus. Functionally, sequence-specific RNA-binding protein which participates in the control of pre-mRNA splicing. This chain is Transformer-2 protein homolog (tra2), found in Dictyostelium discoideum (Social amoeba).